A 220-amino-acid chain; its full sequence is N-(5'-phosphoribosyl)anthranilate isomerase (220 aa).

The protein belongs to the TrpF family.

The catalysed reaction is N-(5-phospho-beta-D-ribosyl)anthranilate = 1-(2-carboxyphenylamino)-1-deoxy-D-ribulose 5-phosphate. Its pathway is amino-acid biosynthesis; L-tryptophan biosynthesis; L-tryptophan from chorismate: step 3/5. This Xylella fastidiosa (strain M23) protein is N-(5'-phosphoribosyl)anthranilate isomerase.